Reading from the N-terminus, the 112-residue chain is Nitrogen regulatory protein P-II (112 aa).

An O-UMP-tyrosine modification is found at Y51.

The protein belongs to the P(II) protein family. In terms of assembly, homotrimer.

Functionally, in nitrogen-limiting conditions, when the ratio of Gln to 2-ketoglutarate decreases, P-II is uridylylated to P-II-UMP. P-II-UMP allows the deadenylation of glutamine synthetase (GS), thus activating the enzyme. Conversely, in nitrogen excess P-II is deuridylated and promotes the adenylation of GS. P-II indirectly controls the transcription of the GS gene (glnA). P-II prevents NR-II-catalyzed conversion of NR-I to NR-I-phosphate, the transcriptional activator of glnA. When P-II is uridylylated to P-II-UMP, these events are reversed. The sequence is that of Nitrogen regulatory protein P-II (glnB) from Bradyrhizobium diazoefficiens (strain JCM 10833 / BCRC 13528 / IAM 13628 / NBRC 14792 / USDA 110).